Here is a 515-residue protein sequence, read N- to C-terminus: Probable cytochrome P450 4p3 (515 aa).

2 residues coordinate heme: Glu-322 and Cys-461.

It belongs to the cytochrome P450 family. The cofactor is heme.

The protein resides in the endoplasmic reticulum membrane. It is found in the microsome membrane. Its function is as follows. May be involved in the metabolism of insect hormones and in the breakdown of synthetic insecticides. This Drosophila melanogaster (Fruit fly) protein is Probable cytochrome P450 4p3 (Cyp4p3).